Here is a 340-residue protein sequence, read N- to C-terminus: MSEKNAYAKSGVDVEAGYEVVERIKKHVARTERAGVMGALGGFGGMFDLSKTGVREPVLVSGTDGVGTKLMLAIKYDKHDTIGQDCVAMCVNDIIAAGAEPLYFLDYVATGKNNPVKFEEVVSGVAEGCVQAGAALIGGETAEMPGMYGEDDYDLAGFAVGVAEKSQLIDGSKVKEGDILLGLASSGIHSNGYSLVRRVFADYTGKELLPELEGKQLKDVLLEPTRIYVRAALPLIKEELINGIGHITGGGFIENVPRMFADDLAAEIDEDKVPVLPIFKALEKYGDIKHEEMFEIFNMGVGLMLAVSPENVNRVKELLDEPVYEIGRIIKKADDSVVIK.

This sequence belongs to the AIR synthase family.

It localises to the cytoplasm. The catalysed reaction is 2-formamido-N(1)-(5-O-phospho-beta-D-ribosyl)acetamidine + ATP = 5-amino-1-(5-phospho-beta-D-ribosyl)imidazole + ADP + phosphate + H(+). Its pathway is purine metabolism; IMP biosynthesis via de novo pathway; 5-amino-1-(5-phospho-D-ribosyl)imidazole from N(2)-formyl-N(1)-(5-phospho-D-ribosyl)glycinamide: step 2/2. This chain is Phosphoribosylformylglycinamidine cyclo-ligase, found in Streptococcus pyogenes serotype M28 (strain MGAS6180).